Here is a 336-residue protein sequence, read N- to C-terminus: Fructose-1,6-bisphosphatase class 1 (336 aa).

Mg(2+)-binding residues include glutamate 91, aspartate 114, leucine 116, and aspartate 117. Substrate contacts are provided by residues aspartate 117 to serine 120, asparagine 210, tyrosine 243, and lysine 273. Glutamate 279 lines the Mg(2+) pocket.

The protein belongs to the FBPase class 1 family. Homotetramer. The cofactor is Mg(2+).

The protein localises to the cytoplasm. It carries out the reaction beta-D-fructose 1,6-bisphosphate + H2O = beta-D-fructose 6-phosphate + phosphate. Its pathway is carbohydrate biosynthesis; gluconeogenesis. The protein is Fructose-1,6-bisphosphatase class 1 of Dichelobacter nodosus (strain VCS1703A).